Here is a 440-residue protein sequence, read N- to C-terminus: Transposon Ty1-GR2 Gag polyprotein (440 aa).

A compositionally biased stretch (low complexity) spans 1–16 (MESQQLSQHSHISHGS). Disordered regions lie at residues 1-93 (MESQ…MMTQ), 126-173 (PQSQ…RPPP), and 352-440 (GSRN…PGTY). Polar residues-rich tracts occupy residues 48 to 60 (TKAN…TPAS) and 127 to 152 (QSQF…GNTF). Residues 153–165 (TDSSSADSDMTST) show a composition bias toward low complexity. Positions 299–401 (NNGIHINNKV…NSKSKTARAH (103 aa)) are RNA-binding. Residues 402–418 (NVSTSNNSPSTDNDSIS) show a composition bias toward low complexity. Ser416 is subject to Phosphoserine. Over residues 419–428 (KSTTEPIQLN) the composition is skewed to polar residues. Residues 429-440 (NKHDLHLRPGTY) show a composition bias toward basic and acidic residues.

As to quaternary structure, homotrimer.

It is found in the cytoplasm. Functionally, capsid protein (CA) is the structural component of the virus-like particle (VLP), forming the shell that encapsulates the retrotransposons dimeric RNA genome. The particles are assembled from trimer-clustered units and there are holes in the capsid shells that allow for the diffusion of macromolecules. CA also has nucleocapsid-like chaperone activity, promoting primer tRNA(i)-Met annealing to the multipartite primer-binding site (PBS), dimerization of Ty1 RNA and initiation of reverse transcription. This Saccharomyces cerevisiae (strain ATCC 204508 / S288c) (Baker's yeast) protein is Transposon Ty1-GR2 Gag polyprotein (TY1A-GR2).